Here is a 278-residue protein sequence, read N- to C-terminus: Outer spore wall protein 1 (278 aa).

The protein resides in the spore wall. In terms of biological role, may be involved in a late step of spore wall assembly. The polypeptide is Outer spore wall protein 1 (OSW1) (Saccharomyces cerevisiae (strain ATCC 204508 / S288c) (Baker's yeast)).